A 361-amino-acid chain; its full sequence is tRNA-specific 2-thiouridylase MnmA (361 aa).

Residues 8–15 (GMSGGVDS) and methionine 34 each bind ATP. The interaction with target base in tRNA stretch occupies residues 94–96 (NPD). The active-site Nucleophile is the cysteine 99. Cysteine 99 and cysteine 195 are joined by a disulfide. Glycine 123 contributes to the ATP binding site. The interval 145–147 (KDQ) is interaction with tRNA. Catalysis depends on cysteine 195, which acts as the Cysteine persulfide intermediate. Residues 307-308 (RY) form an interaction with tRNA region.

This sequence belongs to the MnmA/TRMU family.

It localises to the cytoplasm. The enzyme catalyses S-sulfanyl-L-cysteinyl-[protein] + uridine(34) in tRNA + AH2 + ATP = 2-thiouridine(34) in tRNA + L-cysteinyl-[protein] + A + AMP + diphosphate + H(+). Its function is as follows. Catalyzes the 2-thiolation of uridine at the wobble position (U34) of tRNA, leading to the formation of s(2)U34. This is tRNA-specific 2-thiouridylase MnmA from Legionella pneumophila (strain Paris).